Consider the following 428-residue polypeptide: Serine--tRNA ligase (428 aa).

Thr231–Glu233 contacts L-serine. Arg262–Glu264 is a binding site for ATP. Glu285 lines the L-serine pocket. Glu349–Ser352 is an ATP binding site. Residue Ser385 participates in L-serine binding.

The protein belongs to the class-II aminoacyl-tRNA synthetase family. Type-1 seryl-tRNA synthetase subfamily. Homodimer. The tRNA molecule binds across the dimer.

It localises to the cytoplasm. It catalyses the reaction tRNA(Ser) + L-serine + ATP = L-seryl-tRNA(Ser) + AMP + diphosphate + H(+). The catalysed reaction is tRNA(Sec) + L-serine + ATP = L-seryl-tRNA(Sec) + AMP + diphosphate + H(+). Its pathway is aminoacyl-tRNA biosynthesis; selenocysteinyl-tRNA(Sec) biosynthesis; L-seryl-tRNA(Sec) from L-serine and tRNA(Sec): step 1/1. In terms of biological role, catalyzes the attachment of serine to tRNA(Ser). Is also able to aminoacylate tRNA(Sec) with serine, to form the misacylated tRNA L-seryl-tRNA(Sec), which will be further converted into selenocysteinyl-tRNA(Sec). This is Serine--tRNA ligase from Methylorubrum extorquens (strain PA1) (Methylobacterium extorquens).